A 100-amino-acid polypeptide reads, in one-letter code: Urease subunit gamma (100 aa).

It belongs to the urease gamma subunit family. Heterotrimer of UreA (gamma), UreB (beta) and UreC (alpha) subunits. Three heterotrimers associate to form the active enzyme.

It localises to the cytoplasm. The enzyme catalyses urea + 2 H2O + H(+) = hydrogencarbonate + 2 NH4(+). It functions in the pathway nitrogen metabolism; urea degradation; CO(2) and NH(3) from urea (urease route): step 1/1. The protein is Urease subunit gamma of Paracidovorax citrulli (strain AAC00-1) (Acidovorax citrulli).